The sequence spans 343 residues: Selenide, water dikinase (343 aa).

Cysteine 15 is an active-site residue. ATP is bound by residues lysine 18 and 46–48; that span reads NKD. Aspartate 49 contacts Mg(2+). ATP is bound by residues aspartate 66, aspartate 89, and 137-139; that span reads GHS. Aspartate 89 is a binding site for Mg(2+). Aspartate 225 serves as a coordination point for Mg(2+).

This sequence belongs to the selenophosphate synthase 1 family. Class I subfamily. In terms of assembly, homodimer. The cofactor is Mg(2+).

The enzyme catalyses hydrogenselenide + ATP + H2O = selenophosphate + AMP + phosphate + 2 H(+). Synthesizes selenophosphate from selenide and ATP. The chain is Selenide, water dikinase from Sulfurovum sp. (strain NBC37-1).